The chain runs to 533 residues: E3 ubiquitin-protein ligase arih1l (533 aa).

Disordered stretches follow at residues 1-35 and 48-73; these read MDSDEGYNYEFDDEEEEEEEEEECSVDSGEEEAVD and PAVAGGEPDDCADTGGGGPGPGQEDE. The tract at residues 158–369 is TRIAD supradomain; it reads QDLPCQICYL…SAWYNCNRYN (212 aa). Zn(2+) is bound by residues Cys-162, Cys-165, Cys-179, His-181, Cys-184, Cys-187, Cys-207, Cys-212, Cys-252, Cys-257, Cys-273, Cys-275, Cys-280, Cys-283, His-288, Cys-293, Cys-320, and Cys-323. An RING-type 1 zinc finger spans residues 162 to 212; sequence CQICYLNYPNSYFTGLECGHKFCMQCWGDYLTTKIIEEGMGQTISCPAHNC. The IBR-type zinc-finger motif lies at 232–293; the sequence is LKYQHLITNS…GENWHDPVKC (62 aa). An RING-type 2; atypical zinc finger spans residues 320 to 351; the sequence is CPKCHVTIEKDGGCNHMVCRNQNCKAEFCWVC. Cys-333 is an active-site residue. Residues Cys-338, Cys-343, Cys-348, Cys-351, His-358, and Cys-365 each coordinate Zn(2+). Positions 409–425 form a coiled coil; sequence KLYAQVKQKMEEMQQHN.

Belongs to the RBR family. Ariadne subfamily.

The protein resides in the cytoplasm. It catalyses the reaction [E2 ubiquitin-conjugating enzyme]-S-ubiquitinyl-L-cysteine + [acceptor protein]-L-lysine = [E2 ubiquitin-conjugating enzyme]-L-cysteine + [acceptor protein]-N(6)-ubiquitinyl-L-lysine.. It participates in protein modification; protein ubiquitination. E3 ubiquitin-protein ligase, which catalyzes polyubiquitination of target proteins together with ubiquitin-conjugating enzyme E2 ube2l3. The sequence is that of E3 ubiquitin-protein ligase arih1l (arih1l) from Danio rerio (Zebrafish).